Here is a 103-residue protein sequence, read N- to C-terminus: UPF0058 protein MJ1205 (103 aa).

Belongs to the UPF0058 family.

The protein is UPF0058 protein MJ1205 of Methanocaldococcus jannaschii (strain ATCC 43067 / DSM 2661 / JAL-1 / JCM 10045 / NBRC 100440) (Methanococcus jannaschii).